The chain runs to 75 residues: Guanine nucleotide-binding protein G(I)/G(S)/G(O) subunit gamma-4 (75 aa).

C72 bears the Cysteine methyl ester mark. C72 carries S-geranylgeranyl cysteine lipidation. Residues 73–75 constitute a propeptide, removed in mature form; the sequence is TIL.

This sequence belongs to the G protein gamma family. As to quaternary structure, g proteins are composed of 3 units, alpha, beta and gamma. Interacts with beta-1 and beta-2, but not with beta-3. Interacts with KCNK1. Interacts (via C-terminus) with KCNK2/TREK-1 (via N-terminus); this interaction confers ion selectivity to Cl(-) and L-glutamate. Brain.

The protein localises to the cell membrane. Functionally, guanine nucleotide-binding proteins (G proteins) are involved as a modulator or transducer in various transmembrane signaling systems. The beta and gamma chains are required for the GTPase activity, for replacement of GDP by GTP, and for G protein-effector interaction. This Mus musculus (Mouse) protein is Guanine nucleotide-binding protein G(I)/G(S)/G(O) subunit gamma-4 (Gng4).